The primary structure comprises 407 residues: Arylacetamide deacetylase-like 4 (407 aa).

Residues 1 to 4 (MAVP) are Cytoplasmic-facing. The chain crosses the membrane as a helical; Signal-anchor for type II membrane protein span at residues 5 to 25 (WLVLLLALPIFFLGVFVWAVF). Residues 26 to 407 (EHFLTTDIPA…NAVVSYIKGI (382 aa)) lie on the Lumenal side of the membrane. Positions 119-121 (HGG) match the Involved in the stabilization of the negatively charged intermediate by the formation of the oxyanion hole motif. The N-linked (GlcNAc...) asparagine glycan is linked to Asn168. Ser193 is a catalytic residue. An N-linked (GlcNAc...) asparagine glycan is attached at Asn269. Residues Asp347 and His377 contribute to the active site.

The protein belongs to the 'GDXG' lipolytic enzyme family.

The protein resides in the membrane. This Homo sapiens (Human) protein is Arylacetamide deacetylase-like 4 (AADACL4).